The primary structure comprises 1358 residues: MGEAAAVVAVNGERYEAVGVDPSMTLLEFLRTRTPFRGPKLGCGEGGCGACAVVVSKYDAAADEVTSFSASSCLTLLGSLHHCAVTTSEGIGNSRDGFHPVQRRLAGFHASQCGFCTPGMCVSIFSALANADRAASAAPPPPPTPPGFSRLTAADAERAVSGNLCRCTGYRPILDACKSFAADVDLEDLGLNSFWKKGERADITKLPAYSCTADVATFPEFLKSEIRSSGGAPAVAVTGDGCWFHPRSIEEFHRLFECNLFDEMSVKIVASNTGSGVYKDQDLHDKYINISQIPELSAINRSSNGIEIGAAVSISKAIEILRSDGGDAVVFRKIAYHLGKVASPFVRNTATIGGNIIMAQRMSFPSDIATVLLAAGSTVTIQQVASKRMCLTLEEFLKQPPCDSRTLLISISIPDWCSYDGITFETFRAAPRPFGNAVSYVNSAFLARSSLDAASGSHLIEDVRLAFGAFGSEHAIRASKVEEFLKGKLVSASVILEAVRLLKGVVSPAEGTTHPEYRVSLAVSYLFRFLSSLANGLDDKPENANNVPNGSCTTNGTTNGSAESTVDSFDLPIKSRQEMVFSDEYKPVGKPIKKVGAELQASGEAVYVDDIPAPKDCLYGAFIYSTHPHAHIKGVNFRSSLASQKVITVITAKDIPTGGENVGSCFPMLGDEALFADPVAEFAGQNIGVVIAETQKYAYMAARQAVIEYNTENLQPPILTVEDAVQHNSYFQVPPFLQPKPIGDFNQAMSEADHKIIDGEVKLGSQYYFYMETQTALAFPDEDNCITVYCSAQMPEVTQDIVARCLGVPFHNVRIITRRVGGGFGGKAMKATHVATACAVAAFKLRRPVRMYLDRKTDMIMAGGRHPMKAKYSVGFKSDGKITALHLDLKINAGISPEFSPAIPYAIVGALKKYSWGALAFDIKVCKTNVSSKSAMRAPGDAQGSFIAEAIVEHVASTLSVATNTIRRKNLHDLESLKVFFGDSAAGEASTSSYSLVIIFDRLASTPEYQRRAAMVEQFNGSSRWKKRGISCVPITYSVTLRPSPGKVSILNDGSIAVEVGGVEIGQGLWTKVKQMTAFALGQLCDDGGEGLLDNVRVIQADTLSMIQGGWTAGSTTSETSCEAVRKSCAALVERLKPIKEKAGTLPWKSFIAQASMASVKLTEHAYWTPDPTFTSYMNYGAATSEVEVDVLTGATTILRSDLVYDCGQSLNPAVDLGQVEGAFVQGVGFFTNEEYATNADGLVIHDGTWTYKIPTVDTIPKQFNVELINTARHHSRVLSSKASGEPPLLLASSVHCAMREAIRAARREFAAVGGGTGGSDQVTSFQMDVPATMPAVKELCGLDVVERYLESFSATTA.

The 2Fe-2S ferredoxin-type domain maps to 4-91; it reads AAAVVAVNGE…HCAVTTSEGI (88 aa). [2Fe-2S] cluster is bound by residues Cys43, Cys48, Cys51, and Cys73. Positions 236 to 418 constitute an FAD-binding PCMH-type domain; that stretch reads AVTGDGCWFH…ISISIPDWCS (183 aa). A disordered region spans residues 540-567; sequence KPENANNVPNGSCTTNGTTNGSAESTVD. Low complexity predominate over residues 549-561; it reads NGSCTTNGTTNGS.

The protein belongs to the xanthine dehydrogenase family. In terms of assembly, aldehyde oxidases (AO) are homodimers and heterodimers of AO subunits. It depends on [2Fe-2S] cluster as a cofactor. FAD serves as cofactor. Mo-molybdopterin is required as a cofactor.

It catalyses the reaction an aldehyde + O2 + H2O = a carboxylate + H2O2 + H(+). The sequence is that of Probable aldehyde oxidase 1 from Oryza sativa subsp. japonica (Rice).